The following is a 274-amino-acid chain: Large ribosomal subunit protein uL2 (274 aa).

A disordered region spans residues 225–274 (MNPVDHPHGGGEGRSPIGRHPVTPWGKPTLGVKTRKKNKASSKLIIKRRK). Residues 257-274 (KTRKKNKASSKLIIKRRK) show a composition bias toward basic residues.

This sequence belongs to the universal ribosomal protein uL2 family. As to quaternary structure, part of the 50S ribosomal subunit. Forms a bridge to the 30S subunit in the 70S ribosome.

One of the primary rRNA binding proteins. Required for association of the 30S and 50S subunits to form the 70S ribosome, for tRNA binding and peptide bond formation. It has been suggested to have peptidyltransferase activity; this is somewhat controversial. Makes several contacts with the 16S rRNA in the 70S ribosome. This is Large ribosomal subunit protein uL2 from Carboxydothermus hydrogenoformans (strain ATCC BAA-161 / DSM 6008 / Z-2901).